A 180-amino-acid chain; its full sequence is Large ribosomal subunit protein uL5 (180 aa).

This sequence belongs to the universal ribosomal protein uL5 family. As to quaternary structure, part of the 50S ribosomal subunit; part of the 5S rRNA/L5/L18/L25 subcomplex. Contacts the 5S rRNA and the P site tRNA. Forms a bridge to the 30S subunit in the 70S ribosome.

Functionally, this is one of the proteins that bind and probably mediate the attachment of the 5S RNA into the large ribosomal subunit, where it forms part of the central protuberance. In the 70S ribosome it contacts protein S13 of the 30S subunit (bridge B1b), connecting the 2 subunits; this bridge is implicated in subunit movement. Contacts the P site tRNA; the 5S rRNA and some of its associated proteins might help stabilize positioning of ribosome-bound tRNAs. This Chlamydia abortus (strain DSM 27085 / S26/3) (Chlamydophila abortus) protein is Large ribosomal subunit protein uL5.